Consider the following 541-residue polypeptide: Eukaryotic translation initiation factor 3 subunit E (541 aa).

The PCI domain maps to 252–443 (VEMFLSPVYL…GMVFMNPTHP (192 aa)). The interval 466–541 (AIDRKAHPPS…QQPAQAIAAN (76 aa)) is disordered. Residues 490 to 502 (NAGGRGGRGGQRN) are compositionally biased toward gly residues. The span at 506–522 (QRDRSHAHNNEAKREGE) shows a compositional bias: basic and acidic residues. Positions 523–541 (SASAEEAQQQQPAQAIAAN) are enriched in low complexity.

Belongs to the eIF-3 subunit E family. In terms of assembly, component of the eukaryotic translation initiation factor 3 (eIF-3) complex.

It is found in the cytoplasm. In terms of biological role, component of the eukaryotic translation initiation factor 3 (eIF-3) complex, which is involved in protein synthesis of a specialized repertoire of mRNAs and, together with other initiation factors, stimulates binding of mRNA and methionyl-tRNAi to the 40S ribosome. The eIF-3 complex specifically targets and initiates translation of a subset of mRNAs involved in cell proliferation. The sequence is that of Eukaryotic translation initiation factor 3 subunit E from Mycosarcoma maydis (Corn smut fungus).